The sequence spans 102 residues: NADH-quinone oxidoreductase subunit K (102 aa).

3 helical membrane passes run 5–25, 31–51, and 66–86; these read LEHY…GIFV, IVIL…MVAF, and FVLT…VVFF.

This sequence belongs to the complex I subunit 4L family. In terms of assembly, NDH-1 is composed of 14 different subunits. Subunits NuoA, H, J, K, L, M, N constitute the membrane sector of the complex.

It is found in the cellular chromatophore membrane. The catalysed reaction is a quinone + NADH + 5 H(+)(in) = a quinol + NAD(+) + 4 H(+)(out). In terms of biological role, NDH-1 shuttles electrons from NADH, via FMN and iron-sulfur (Fe-S) centers, to quinones in the respiratory chain. The immediate electron acceptor for the enzyme in this species is believed to be ubiquinone. Couples the redox reaction to proton translocation (for every two electrons transferred, four hydrogen ions are translocated across the cytoplasmic membrane), and thus conserves the redox energy in a proton gradient. The protein is NADH-quinone oxidoreductase subunit K of Rhodobacter capsulatus (Rhodopseudomonas capsulata).